A 196-amino-acid polypeptide reads, in one-letter code: Transmembrane 4 L6 family member 5 (196 aa).

The Cytoplasmic segment spans residues 1-9 (MCTGKCARF). The chain crosses the membrane as a helical span at residues 10 to 30 (VGLSLIPLSLVCIVANALLLV). The Extracellular portion of the chain corresponds to 31 to 45 (PNGQTTWTKDHLSLQ). A helical transmembrane segment spans residues 46-66 (VWLMAGFVGGGLMVLCPGISA). At 67-89 (VRAGGKGCCGAGCCGNRCRMLRS) the chain is on the cytoplasmic side. The helical transmembrane segment at 90–110 (VFCSAIGLLGAIYCLSVSGTG) threads the bilayer. Positions 90–196 (VFCSAIGLLG…DCRKKQGSSQ (107 aa)) are interaction with MTOR and CASTOR1. The Extracellular segment spans residues 111-156 (LRIGPQCLMNGSWDYHFQDTAGSYLLNRTQWNLCVEPPDVVLWNVT). Asn-120 carries N-linked (GlcNAc...) asparagine glycosylation. 123-128 (WDYHFQ) serves as a coordination point for L-arginine. 2 N-linked (GlcNAc...) asparagine glycosylation sites follow: Asn-137 and Asn-154. Residues 157 to 177 (LFSLLVAASCLEILLCGVQLV) traverse the membrane as a helical segment. Residues 178–196 (NASIGVLCGDCRKKQGSSQ) are Cytoplasmic-facing.

The protein belongs to the L6 tetraspanin family. As to quaternary structure, interacts with MTOR; the interaction is positively regulated by arginine and is negatively regulated by leucine. Interacts with SLC38A9. Interacts with SLC7A1; the interaction is negatively regulated by arginine. Interacts with CASTOR1; the interaction is positively regulated by leucine and is negatively regulated by arginine.

It is found in the lysosome membrane. It localises to the cell membrane. Acts as a lysosomal membrane arginine sensor. Forms a complex with MTOR and SLC38A9 on lysosomal membranes in an arginine-regulated manner, leading to arginine efflux which enables the activation of mTORC1 which subsequently leads to RPS6KB1 and EIF4EBP1 phosphorylations. Facilitates cell cycle G1/S phase progression and the translocation of the CDK4-CCND1 complex into the nucleus. CDKN1B and RHOA/ROCK signaling activity are involved in TM4SF5-mediated acceleration of G1/S phase progression. The polypeptide is Transmembrane 4 L6 family member 5 (TM4SF5) (Bos taurus (Bovine)).